The sequence spans 423 residues: Type II methyltransferase M.NgoBV (423 aa).

The SAM-dependent MTase C5-type domain occupies 4-423 (IKFIDLFSGM…AVSERLLHTL (420 aa)). Residue Cys80 is part of the active site.

This sequence belongs to the class I-like SAM-binding methyltransferase superfamily. C5-methyltransferase family.

The enzyme catalyses a 2'-deoxycytidine in DNA + S-adenosyl-L-methionine = a 5-methyl-2'-deoxycytidine in DNA + S-adenosyl-L-homocysteine + H(+). Its function is as follows. A methylase, recognizes the double-stranded sequence 5'-GGNNCC-3', methylates C-5 on both strands, and protects the DNA from cleavage by the NgoBV endonuclease. The chain is Type II methyltransferase M.NgoBV (ngoBVM) from Neisseria gonorrhoeae.